We begin with the raw amino-acid sequence, 475 residues long: Ribulose bisphosphate carboxylase large chain (475 aa).

A propeptide spanning residues 1–2 (MS) is cleaved from the precursor. An N-acetylproline modification is found at Pro3. Positions 123 and 173 each coordinate substrate. Lys175 acts as the Proton acceptor in catalysis. A substrate-binding site is contributed by Lys177. Mg(2+) contacts are provided by Lys201, Asp203, and Glu204. Lys201 carries the post-translational modification N6-carboxylysine. The active-site Proton acceptor is His294. Substrate-binding residues include Arg295, His327, and Ser379.

Belongs to the RuBisCO large chain family. Type I subfamily. In terms of assembly, heterohexadecamer of 8 large chains and 8 small chains; disulfide-linked. The disulfide link is formed within the large subunit homodimers. Mg(2+) serves as cofactor. In terms of processing, the disulfide bond which can form in the large chain dimeric partners within the hexadecamer appears to be associated with oxidative stress and protein turnover.

It localises to the plastid. The protein resides in the chloroplast. It carries out the reaction 2 (2R)-3-phosphoglycerate + 2 H(+) = D-ribulose 1,5-bisphosphate + CO2 + H2O. It catalyses the reaction D-ribulose 1,5-bisphosphate + O2 = 2-phosphoglycolate + (2R)-3-phosphoglycerate + 2 H(+). Functionally, ruBisCO catalyzes two reactions: the carboxylation of D-ribulose 1,5-bisphosphate, the primary event in carbon dioxide fixation, as well as the oxidative fragmentation of the pentose substrate in the photorespiration process. Both reactions occur simultaneously and in competition at the same active site. This Gnetum parvifolium (Small-leaved jointfir) protein is Ribulose bisphosphate carboxylase large chain.